A 270-amino-acid chain; its full sequence is Hydroxyethylthiazole kinase (270 aa).

A substrate-binding site is contributed by Met46. Residues Arg120 and Thr166 each contribute to the ATP site. Gly193 serves as a coordination point for substrate.

The protein belongs to the Thz kinase family. Requires Mg(2+) as cofactor.

It carries out the reaction 5-(2-hydroxyethyl)-4-methylthiazole + ATP = 4-methyl-5-(2-phosphooxyethyl)-thiazole + ADP + H(+). Its pathway is cofactor biosynthesis; thiamine diphosphate biosynthesis; 4-methyl-5-(2-phosphoethyl)-thiazole from 5-(2-hydroxyethyl)-4-methylthiazole: step 1/1. Functionally, catalyzes the phosphorylation of the hydroxyl group of 4-methyl-5-beta-hydroxyethylthiazole (THZ). The sequence is that of Hydroxyethylthiazole kinase from Herpetosiphon aurantiacus (strain ATCC 23779 / DSM 785 / 114-95).